An 862-amino-acid polypeptide reads, in one-letter code: MAQLSFNAALKMNALGNKAIHDPTNCRAKSEGQMMWVCSKSGRTRVKMSRGSGGPGPVVMMSSSTGTSKVVSETSSTIVDDIPRLSANYHGDLWHHNVIQTLETPFRESSTYQERADELVVKIKDMFNALGDGDISPSAYDTAWVARVATISSDGSEKPRFPQALNWVFNNQLQDGSWGIESHFSLCDRLLNTTNSVIALSVWKTGHSQVEQGTEFIAENLRLLNEEDELSPDFEIIFPALLQKAKALGINLPYDLPFIKYLSTTREARLTDVSAAADNIPANMLNALEGLEEVMDWKKIMRFQSKDGSFLSSPASTACVLMNTGDEKCFTFLNNLLVKFGGCVPCMYSIDLLERLSLVDNIEHLGIGRHFKQEIKVALDYVYRHWSERGIGWGRDSLVPDLNTTALGLRTLRTHGYDVSSDVLNNFKDENGRFFSSAGQTHVELRSVVILFRASDLAFPDEGAMDDARKFAEPYLRDALATKISTNTKLFKEIEYVVEYPWHMSIPRSEARSYIDSYDDDYVWERKTLYRMPSLSNSKCLELAKLDFNIVQSLHQEELKLLTRWWKESGMADINFTRHRVAEVYFSSATFEPEYSATRIAFTKIGCLQVLFDDMADIFATLDELKSFTEGVKRWDTSLLHEIPECMQTCFKVWFKLIEEVNNDVVKVQGRDMLAHIRKPWELYFNCYVQEREWLDAGYIPTFEEYLKTYAISVGLGPCTLQPILLMGELVKDDVVEKVHYPSNMFELVSLSWRLTNDTKTYQAEKARGQQASGIACYMKDNLGATEEDAIKHICRVVDRALKEASFEYFKPSNDIPMGCKSFIFNLRLCVQIFYKFIDGYGIANEEIKDYIRKVYIDPIQV.

Residues 45–66 are disordered; it reads RVKMSRGSGGPGPVVMMSSSTG. Residues Asp-613, Asp-617, Asn-757, Thr-761, and Glu-765 each coordinate Mg(2+). A DDXXD motif motif is present at residues 613 to 617; that stretch reads DDMAD.

The protein belongs to the terpene synthase family. Requires Mg(2+) as cofactor.

The catalysed reaction is (2E,6E,10E)-geranylgeranyl diphosphate = taxa-4(5),11(12)-diene + diphosphate. The protein operates within alkaloid biosynthesis; taxol biosynthesis; taxa-4(20),11-dien-5alpha-ol from geranylgeranyl diphosphate: step 1/2. Its function is as follows. Catalyzes the cyclization of the ubiquitous isoprenoid intermediate geranylgeranyl diphosphate to taxa-4,11-diene, the parent olefin with a taxane skeleton. This chain is Taxadiene synthase (TDC1), found in Taxus chinensis (Chinese yew).